Here is a 181-residue protein sequence, read N- to C-terminus: Transcription termination/antitermination protein NusG (181 aa).

One can recognise a KOW domain in the interval 130-161; that stretch reads PGEMVRVNDGPFADFNGVVEEVDYEKSRLKVS.

It belongs to the NusG family. Monomer. Interacts with the transcription termination factor Rho and with RNA polymerase.

Its function is as follows. Participates in transcription elongation, termination and antitermination. In the absence of Rho, increases the rate of transcription elongation by the RNA polymerase (RNAP), probably by partially suppressing pausing. In the presence of Rho, modulates most Rho-dependent termination events by interacting with the RNAP to render the complex more susceptible to the termination activity of Rho. May be required to overcome a kinetic limitation of Rho to function at certain terminators. Also involved in ribosomal RNA transcriptional antitermination. The sequence is that of Transcription termination/antitermination protein NusG from Shigella flexneri.